We begin with the raw amino-acid sequence, 400 residues long: Nicotinate phosphoribosyltransferase (400 aa).

Histidine 220 carries the phosphohistidine; by autocatalysis modification.

The protein belongs to the NAPRTase family. Post-translationally, transiently phosphorylated on a His residue during the reaction cycle. Phosphorylation strongly increases the affinity for substrates and increases the rate of nicotinate D-ribonucleotide production. Dephosphorylation regenerates the low-affinity form of the enzyme, leading to product release.

The enzyme catalyses nicotinate + 5-phospho-alpha-D-ribose 1-diphosphate + ATP + H2O = nicotinate beta-D-ribonucleotide + ADP + phosphate + diphosphate. The protein operates within cofactor biosynthesis; NAD(+) biosynthesis; nicotinate D-ribonucleotide from nicotinate: step 1/1. Functionally, catalyzes the synthesis of beta-nicotinate D-ribonucleotide from nicotinate and 5-phospho-D-ribose 1-phosphate at the expense of ATP. The sequence is that of Nicotinate phosphoribosyltransferase from Escherichia coli O7:K1 (strain IAI39 / ExPEC).